The primary structure comprises 474 residues: 3-isopropylmalate dehydratase large subunit (474 aa).

The disordered stretch occupies residues glycine 293–proline 313. [4Fe-4S] cluster-binding residues include cysteine 348, cysteine 408, and cysteine 411.

The protein belongs to the aconitase/IPM isomerase family. LeuC type 1 subfamily. As to quaternary structure, heterodimer of LeuC and LeuD. Requires [4Fe-4S] cluster as cofactor.

It carries out the reaction (2R,3S)-3-isopropylmalate = (2S)-2-isopropylmalate. The protein operates within amino-acid biosynthesis; L-leucine biosynthesis; L-leucine from 3-methyl-2-oxobutanoate: step 2/4. Functionally, catalyzes the isomerization between 2-isopropylmalate and 3-isopropylmalate, via the formation of 2-isopropylmaleate. This chain is 3-isopropylmalate dehydratase large subunit, found in Natronomonas pharaonis (strain ATCC 35678 / DSM 2160 / CIP 103997 / JCM 8858 / NBRC 14720 / NCIMB 2260 / Gabara) (Halobacterium pharaonis).